The following is a 404-amino-acid chain: Cysteine desulfurase IscS (404 aa).

Pyridoxal 5'-phosphate is bound by residues 75–76, Asn-155, Gln-183, and 203–205; these read AT and SAH. N6-(pyridoxal phosphate)lysine is present on Lys-206. A pyridoxal 5'-phosphate-binding site is contributed by Thr-243. The active-site Cysteine persulfide intermediate is Cys-328. Cys-328 serves as a coordination point for [2Fe-2S] cluster.

This sequence belongs to the class-V pyridoxal-phosphate-dependent aminotransferase family. NifS/IscS subfamily. As to quaternary structure, homodimer. Forms a heterotetramer with IscU, interacts with other sulfur acceptors. Requires pyridoxal 5'-phosphate as cofactor.

It is found in the cytoplasm. The enzyme catalyses (sulfur carrier)-H + L-cysteine = (sulfur carrier)-SH + L-alanine. The protein operates within cofactor biosynthesis; iron-sulfur cluster biosynthesis. Its function is as follows. Master enzyme that delivers sulfur to a number of partners involved in Fe-S cluster assembly, tRNA modification or cofactor biosynthesis. Catalyzes the removal of elemental sulfur atoms from cysteine to produce alanine. Functions as a sulfur delivery protein for Fe-S cluster synthesis onto IscU, an Fe-S scaffold assembly protein, as well as other S acceptor proteins. The sequence is that of Cysteine desulfurase IscS from Pseudomonas entomophila (strain L48).